Reading from the N-terminus, the 350-residue chain is S-adenosylmethionine:tRNA ribosyltransferase-isomerase (350 aa).

It belongs to the QueA family. Monomer.

It localises to the cytoplasm. It catalyses the reaction 7-aminomethyl-7-carbaguanosine(34) in tRNA + S-adenosyl-L-methionine = epoxyqueuosine(34) in tRNA + adenine + L-methionine + 2 H(+). It functions in the pathway tRNA modification; tRNA-queuosine biosynthesis. Transfers and isomerizes the ribose moiety from AdoMet to the 7-aminomethyl group of 7-deazaguanine (preQ1-tRNA) to give epoxyqueuosine (oQ-tRNA). The sequence is that of S-adenosylmethionine:tRNA ribosyltransferase-isomerase from Bacillus cereus (strain B4264).